We begin with the raw amino-acid sequence, 244 residues long: Coenzyme Q-binding protein COQ10 homolog B, mitochondrial (244 aa).

This sequence belongs to the COQ10 family. Interacts with coenzyme Q.

The protein resides in the mitochondrion inner membrane. Its function is as follows. Required for the function of coenzyme Q in the respiratory chain. May serve as a chaperone or may be involved in the transport of Q6 from its site of synthesis to the catalytic sites of the respiratory complexes. The polypeptide is Coenzyme Q-binding protein COQ10 homolog B, mitochondrial (coq10b) (Xenopus laevis (African clawed frog)).